The sequence spans 203 residues: MSAELELLWPVSGLLLLLLGATAWLCVHCSRPGVKRNEKIYEQRNRQENAQSSAAAQTYSLARQVWPGPQMDTAPNKSFERKNKMLFSHLEGPESPRYQNFYKGSNQEPDAAYVDPIPTNYYNWGCFQKPSEDDDSNSYENVLVCKPSTPESGVEDFEDYQNSVSIHQWRESKRTMGAPMSLSGSPDEEPDYVNGDVAAAENI.

The Extracellular portion of the chain corresponds to 1–6 (MSAELE). Residues 7–27 (LLWPVSGLLLLLLGATAWLCV) form a helical; Signal-anchor for type III membrane protein membrane-spanning segment. Residues cysteine 26 and cysteine 29 are each lipidated (S-palmitoyl cysteine). Residues 28 to 203 (HCSRPGVKRN…NGDVAAAENI (176 aa)) lie on the Cytoplasmic side of the membrane. Tyrosine 59 is modified (phosphotyrosine). Phosphoserine occurs at positions 60 and 95. 3 positions are modified to phosphotyrosine: tyrosine 139, tyrosine 160, and tyrosine 192. The tract at residues 171–203 (ESKRTMGAPMSLSGSPDEEPDYVNGDVAAAENI) is disordered.

When phosphorylated, interacts with GRB2. May also interact with SOS1, GAB1 and CBL. Phosphorylated on tyrosines following cross-linking of BCR in B-cells, high affinity IgG receptor (FCGR1) in myeloid cells, or high affinity IgE receptor (FCER1) in mast cells; which induces the recruitment of GRB2. As to expression, strongly expressed in testis. Expressed in heart, spleen and lung. Present in B-cells and mast cells (at protein level).

The protein resides in the cell membrane. Functionally, involved in FCER1 (high affinity immunoglobulin epsilon receptor)-mediated signaling in mast cells. May also be involved in BCR (B-cell antigen receptor)-mediated signaling in B-cells and FCGR1 (high affinity immunoglobulin gamma Fc receptor I)-mediated signaling in myeloid cells. Couples activation of these receptors and their associated kinases with distal intracellular events through the recruitment of GRB2. This Mus musculus (Mouse) protein is Linker for activation of T-cells family member 2 (Lat2).